Consider the following 378-residue polypeptide: MPNSTLTLAQMLIARRSLTPDDDGCQKILVHRLAGLGFNSEAMNFGEVENLWTRKGIDGPLVCFVGHTDVVPTGPVAQWDSDPFTPTVRDGFLYGRGAADMKSSIAAFVTAIEEFVELHPDHKGSIALLITSDEEGPAVEGTVKVVETLQARGEVIDYCIVGEPTCTDRLGDTIKNGRRGSLSGNLTVKGIQGHIAYPHLARNPIHTAAPAIAELAQTVWDDGNEYFPATTWHISNIRGGTGATNVIPGEVNLLFNFRFSTASTVESLKTRVHEILDRHGLEYELVWELSGKPYLTPKGILADALSAAIREVTGVEPELSTSGGTSDGRFIADICSQVVEFGPRNATIHKINESVEVADIERLSRIYRLTLEKLLLQD.

His67 serves as a coordination point for Zn(2+). Asp69 is an active-site residue. Zn(2+) is bound at residue Asp100. Glu134 (proton acceptor) is an active-site residue. 3 residues coordinate Zn(2+): Glu135, Glu163, and His349.

This sequence belongs to the peptidase M20A family. DapE subfamily. As to quaternary structure, homodimer. Zn(2+) is required as a cofactor. Co(2+) serves as cofactor.

It carries out the reaction N-succinyl-(2S,6S)-2,6-diaminopimelate + H2O = (2S,6S)-2,6-diaminopimelate + succinate. Its pathway is amino-acid biosynthesis; L-lysine biosynthesis via DAP pathway; LL-2,6-diaminopimelate from (S)-tetrahydrodipicolinate (succinylase route): step 3/3. Functionally, catalyzes the hydrolysis of N-succinyl-L,L-diaminopimelic acid (SDAP), forming succinate and LL-2,6-diaminopimelate (DAP), an intermediate involved in the bacterial biosynthesis of lysine and meso-diaminopimelic acid, an essential component of bacterial cell walls. The sequence is that of Succinyl-diaminopimelate desuccinylase from Nitrosomonas eutropha (strain DSM 101675 / C91 / Nm57).